The sequence spans 343 residues: Lactamase-like protein nscB (343 aa).

Residues His-118, His-120, Asp-122, and His-123 each coordinate Zn(2+). The active-site Proton donor/acceptor is Asp-122.

This sequence belongs to the metallo-beta-lactamase superfamily. The cofactor is Zn(2+).

The protein operates within secondary metabolite biosynthesis. Lactamase-like protein; part of the gene cluster that mediates the biosynthesis of neosartoricin B, a prenylated anthracenone that probably exhibits T-cell antiproliferative activity, suggestive of a physiological role as an immunosuppressive agent. The non-reducing polyketide synthase nscA probably synthesizes and cyclizes the decaketide backbone. The hydrolase nscB then mediates the product release through hydrolysis followed by spontaneous decarboxylation. The prenyltransferase nscD catalyzes the addition of the dimethylallyl group to the aromatic C5. The FAD-dependent monooxygenase nscC is then responsible for the stereospecific hydroxylation at C2. Neosartoricin B can be converted into two additional compounds neosartoricins C and D. Neosartoricin C is a spirocyclic compound that is cyclized through the attack of C3 hydroxyl on C14, followed by dehydration. On the other hand, neosartoricin D is a further cyclized compound in which attack of C2 on C14 in neosartoricin C results in the formation of the acetal-containing dioxabicyclo-octanone ring. Both of these compounds are novel and possibly represent related metabolites of the gene cluster. In Arthroderma otae (strain ATCC MYA-4605 / CBS 113480) (Microsporum canis), this protein is Lactamase-like protein nscB.